The primary structure comprises 62 residues: Alpha-conotoxin-like S1.1 (62 aa).

The signal sequence occupies residues 1–21 (MGMRMMFTVFLLVVLAITVVS). A propeptide spanning residues 22 to 48 (FPLDRESDGANAEARTHDHEKHALDRN) is cleaved from the precursor. 2 disulfide bridges follow: cysteine 50–cysteine 56 and cysteine 51–cysteine 61. At cysteine 61 the chain carries Cysteine amide.

Belongs to the conotoxin A superfamily. As to expression, expressed by the venom duct.

The protein localises to the secreted. Alpha-conotoxins act on postsynaptic membranes, they bind to the nicotinic acetylcholine receptors (nAChR) and thus inhibit them. This is Alpha-conotoxin-like S1.1 from Conus striatus (Striated cone).